The primary structure comprises 180 residues: Large ribosomal subunit protein uL5 (180 aa).

It belongs to the universal ribosomal protein uL5 family. As to quaternary structure, part of the 50S ribosomal subunit; part of the 5S rRNA/L5/L18/L25 subcomplex. Contacts the 5S rRNA and the P site tRNA. Forms a bridge to the 30S subunit in the 70S ribosome.

This is one of the proteins that bind and probably mediate the attachment of the 5S RNA into the large ribosomal subunit, where it forms part of the central protuberance. In the 70S ribosome it contacts protein S13 of the 30S subunit (bridge B1b), connecting the 2 subunits; this bridge is implicated in subunit movement. Contacts the P site tRNA; the 5S rRNA and some of its associated proteins might help stabilize positioning of ribosome-bound tRNAs. The protein is Large ribosomal subunit protein uL5 of Lactobacillus johnsonii (strain CNCM I-12250 / La1 / NCC 533).